Consider the following 127-residue polypeptide: Small ribosomal subunit protein uS11 (127 aa).

This sequence belongs to the universal ribosomal protein uS11 family. In terms of assembly, part of the 30S ribosomal subunit. Interacts with proteins S7 and S18. Binds to IF-3.

Its function is as follows. Located on the platform of the 30S subunit, it bridges several disparate RNA helices of the 16S rRNA. Forms part of the Shine-Dalgarno cleft in the 70S ribosome. This Anaeromyxobacter dehalogenans (strain 2CP-C) protein is Small ribosomal subunit protein uS11.